We begin with the raw amino-acid sequence, 319 residues long: Acetyl-coenzyme A carboxylase carboxyl transferase subunit alpha (319 aa).

One can recognise a CoA carboxyltransferase C-terminal domain in the interval 32-293 (NVETEVRALR…KAVLLNELDA (262 aa)).

The protein belongs to the AccA family. As to quaternary structure, acetyl-CoA carboxylase is a heterohexamer composed of biotin carboxyl carrier protein (AccB), biotin carboxylase (AccC) and two subunits each of ACCase subunit alpha (AccA) and ACCase subunit beta (AccD).

Its subcellular location is the cytoplasm. The enzyme catalyses N(6)-carboxybiotinyl-L-lysyl-[protein] + acetyl-CoA = N(6)-biotinyl-L-lysyl-[protein] + malonyl-CoA. It participates in lipid metabolism; malonyl-CoA biosynthesis; malonyl-CoA from acetyl-CoA: step 1/1. Its function is as follows. Component of the acetyl coenzyme A carboxylase (ACC) complex. First, biotin carboxylase catalyzes the carboxylation of biotin on its carrier protein (BCCP) and then the CO(2) group is transferred by the carboxyltransferase to acetyl-CoA to form malonyl-CoA. This chain is Acetyl-coenzyme A carboxylase carboxyl transferase subunit alpha, found in Xanthomonas oryzae pv. oryzae (strain MAFF 311018).